A 329-amino-acid chain; its full sequence is MRIALDAMGGDNAPKAHVEAAIRAVQTFPELEVTLIGNEEQIRPHLTDTTRLTVIHTTEKIEDTDKPTTAVRRKKEASMVLCVKEVKEGNADACISSGNTGALMTAGLLYVGRIKGVERPGLAPTLPTIDGNGFLLLDAGANMDASPEHLLQYAIIGDAYRRNVYQQKNPRIGLLNVGAEAGKGTELTKQAYQLLENSSLHFIGNVEARDLFAGVCDIVVCDGFSGNVVLKSVEGTAKMVFSLLKEQLTSSLPAKLAAGMLKPQFRNLKEKMDYSEYGGAGLFGLKAPVIKAHGSSDANAVFHAIRQAKEMVDNEVTKTITQKLENGGE.

This sequence belongs to the PlsX family. In terms of assembly, homodimer. Probably interacts with PlsY.

It is found in the cytoplasm. The enzyme catalyses a fatty acyl-[ACP] + phosphate = an acyl phosphate + holo-[ACP]. It functions in the pathway lipid metabolism; phospholipid metabolism. Catalyzes the reversible formation of acyl-phosphate (acyl-PO(4)) from acyl-[acyl-carrier-protein] (acyl-ACP). This enzyme utilizes acyl-ACP as fatty acyl donor, but not acyl-CoA. The protein is Phosphate acyltransferase of Shouchella clausii (strain KSM-K16) (Alkalihalobacillus clausii).